Here is a 290-residue protein sequence, read N- to C-terminus: 4-hydroxybenzoate octaprenyltransferase (290 aa).

Transmembrane regions (helical) follow at residues 21–41, 44–64, 84–104, 106–126, 142–162, 212–232, 235–255, and 267–287; these read IGTLLLLWPTLWALFLSVKGM, LSILSIFVLGVIFMRAAGCVI, LATGAATPEEAKWLFVLLVFC, FILVLFLNTYAIVLSFIAVFL, LFLGMAFGWSIPMAYGASIEA, IISLLQIVTLFFLGLIGYLSQ, TSYFVVLFLATLLFVYQCKLI, and FLNNNYFGAMVFVAFLFGIFF.

It belongs to the UbiA prenyltransferase family. Requires Mg(2+) as cofactor.

It is found in the cell inner membrane. It catalyses the reaction all-trans-octaprenyl diphosphate + 4-hydroxybenzoate = 4-hydroxy-3-(all-trans-octaprenyl)benzoate + diphosphate. It participates in cofactor biosynthesis; ubiquinone biosynthesis. Its function is as follows. Catalyzes the prenylation of para-hydroxybenzoate (PHB) with an all-trans polyprenyl group. Mediates the second step in the final reaction sequence of ubiquinone-8 (UQ-8) biosynthesis, which is the condensation of the polyisoprenoid side chain with PHB, generating the first membrane-bound Q intermediate 3-octaprenyl-4-hydroxybenzoate. The sequence is that of 4-hydroxybenzoate octaprenyltransferase from Pasteurella multocida (strain Pm70).